The chain runs to 1509 residues: ABC transporter G family member 5 (1509 aa).

The span at M1–S10 shows a compositional bias: basic and acidic residues. The tract at residues M1–K70 is disordered. The segment covering S11–L28 has biased composition (polar residues). Residues N29–N66 show a composition bias toward low complexity. Positions V129–S376 constitute an ABC transporter 1 domain. G168–S175 provides a ligand contact to ATP. The ABC transmembrane type-2 1 domain maps to S472–L748. Helical transmembrane passes span N477 to W497, L512 to F532, I557 to W577, P583 to L603, I616 to F636, I643 to L663, and I725 to L745. Over residues P813–N831 the composition is skewed to low complexity. A disordered region spans residues P813 to S881. The segment covering T839–S881 has biased composition (polar residues). The region spanning L888 to G1141 is the ABC transporter 2 domain. Residue G935–S942 participates in ATP binding. Residues L1231–V1504 form the ABC transmembrane type-2 2 domain. A run of 6 helical transmembrane segments spans residues I1236–V1256, L1271–V1291, Y1320–L1340, C1352–V1372, M1379–I1399, and I1481–F1501.

It belongs to the ABC transporter superfamily. ABCG family. PDR (TC 3.A.1.205) subfamily.

Its subcellular location is the membrane. This chain is ABC transporter G family member 5 (abcG5), found in Dictyostelium discoideum (Social amoeba).